Reading from the N-terminus, the 491-residue chain is Zinc finger and SCAN domain-containing protein 22 (491 aa).

Ser-9 is subject to Phosphoserine. Positions Arg-49–Leu-131 constitute an SCAN box domain. Disordered stretches follow at residues Arg-134 to Thr-161 and Phe-204 to Asp-249. Residues Val-214–Gly-224 show a composition bias toward basic and acidic residues. A compositionally biased stretch (polar residues) spans Ala-225–Lys-241. C2H2-type zinc fingers lie at residues Ser-268–His-290, Tyr-296–His-318, His-324–His-346, Tyr-352–His-374, Tyr-380–His-402, Tyr-408–His-430, Tyr-436–His-458, and Tyr-464–His-486. Lys-443 participates in a covalent cross-link: Glycyl lysine isopeptide (Lys-Gly) (interchain with G-Cter in SUMO2).

This sequence belongs to the krueppel C2H2-type zinc-finger protein family.

It localises to the nucleus. May be involved in transcriptional regulation. This Homo sapiens (Human) protein is Zinc finger and SCAN domain-containing protein 22 (ZSCAN22).